The primary structure comprises 682 residues: Potassium-transporting ATPase ATP-binding subunit (682 aa).

Helical transmembrane passes span 34–54, 58–78, 219–239, and 254–274; these read PVMF…LAMV, IAGS…TVLF, IALT…TATL, and VLVA…LSAI. Residue aspartate 307 is the 4-aspartylphosphate intermediate of the active site. ATP contacts are provided by residues aspartate 344, glutamate 348, 377-384, and lysine 395; that span reads FTAQSRMS. Mg(2+) is bound by residues aspartate 518 and aspartate 522. 3 helical membrane-spanning segments follow: residues 588 to 608, 616 to 636, and 662 to 682; these read FAII…LNVM, AILS…PLAL, and LVVP…LGLA.

Belongs to the cation transport ATPase (P-type) (TC 3.A.3) family. Type IA subfamily. In terms of assembly, the system is composed of three essential subunits: KdpA, KdpB and KdpC.

It is found in the cell inner membrane. It catalyses the reaction K(+)(out) + ATP + H2O = K(+)(in) + ADP + phosphate + H(+). Part of the high-affinity ATP-driven potassium transport (or Kdp) system, which catalyzes the hydrolysis of ATP coupled with the electrogenic transport of potassium into the cytoplasm. This subunit is responsible for energy coupling to the transport system and for the release of the potassium ions to the cytoplasm. This chain is Potassium-transporting ATPase ATP-binding subunit, found in Salmonella typhimurium (strain LT2 / SGSC1412 / ATCC 700720).